Reading from the N-terminus, the 259-residue chain is Thrombin-like enzyme gyroxin B1.7 (259 aa).

The first 18 residues, 1–18 (MVLIRVLANLLILQLSYA), serve as a signal peptide directing secretion. A propeptide spanning residues 19 to 259 (QKSSELVIGG…AGNTAVTCPP (241 aa)) is cleaved from the precursor. The 226-residue stretch at 25–250 (VIGGDECNIN…DTEWIQSIIA (226 aa)) folds into the Peptidase S1 domain. Cystine bridges form between C31–C162, C49–C65, C141–C211, C173–C190, and C201–C226. H64 serves as the catalytic Charge relay system. Residue N102 is glycosylated (N-linked (GlcNAc...) asparagine). Residue D109 is the Charge relay system of the active site. S205 (charge relay system) is an active-site residue.

The protein belongs to the peptidase S1 family. Snake venom subfamily. In terms of assembly, monomer. In terms of tissue distribution, expressed by the venom gland.

It localises to the secreted. Thrombin-like snake venom serine protease. Displays a specificity similar to trypsin. Releases only fibrinopeptide A in the conversion of fibrinogen to fibrin. Shows coagulant, esterase and amidase activities. Reversibly increases the permeability of the blood brain barrier (BBB) in mice. Induces the barrel rotation syndrome in mice, which is manifested by gyroxin-like, rapid rolling motions. This syndrome may be due to its effect on BBB permeability, and certainly also to other actions affecting endogenous substrates present in the endothelium, nervous tissues or blood. The sequence is that of Thrombin-like enzyme gyroxin B1.7 from Crotalus durissus terrificus (South American rattlesnake).